The following is a 105-amino-acid chain: Cell division protein FtsB (105 aa).

Residues 1-3 are Cytoplasmic-facing; that stretch reads MGK. A helical membrane pass occupies residues 4 to 21; that stretch reads LTLLLLALLVWLQYSLWF. Topologically, residues 22–105 are periplasmic; sequence GKNGLHDYTR…QASGQQQNNR (84 aa). The stretch at 33–62 forms a coiled coil; sequence NDDVTAQQATNAKLKARNDQLFAEIDDLNG.

The protein belongs to the FtsB family. Part of a complex composed of FtsB, FtsL and FtsQ.

The protein resides in the cell inner membrane. Functionally, essential cell division protein. May link together the upstream cell division proteins, which are predominantly cytoplasmic, with the downstream cell division proteins, which are predominantly periplasmic. The polypeptide is Cell division protein FtsB (Klebsiella aerogenes (Enterobacter aerogenes)).